The following is a 2896-amino-acid chain: Hemocyanin G-type, units Oda to Odg (2896 aa).

The segment at 1–419 is functional unit Oda; it reads NLIRKDVDAL…ADMVVVDKTG (419 aa). Position 41 (H41) interacts with Cu cation. C47 and C57 are disulfide-bonded. Residues 58 to 60 constitute a cross-link (2'-(S-cysteinyl)-histidine (Cys-His)); it reads CLH. Cu cation is bound by residues H60, H69, H178, H182, and H209. 2 disulfides stabilise this stretch: C168/C234 and C321/C333. The N-linked (GlcNAc...) asparagine glycan is linked to N386. A functional unit Odb region spans residues 420–834; sequence LNVRKDLQSL…KESGVVFDEL (415 aa). H460 contributes to the Cu cation binding site. The cysteines at positions 466 and 477 are disulfide-linked. A cross-link (2'-(S-cysteinyl)-histidine (Cys-His)) is located at residues 478–480; sequence CVH. Cu cation-binding residues include H480, H489, H601, H605, and H632. The cysteines at positions 591 and 657 are disulfide-linked. N-linked (GlcNAc...) asparagine glycosylation occurs at N804. The tract at residues 835–1254 is functional unit Odc; it reads YRSRRDVSSL…GIWVEPVTSA (420 aa). Residue H875 coordinates Cu cation. Cysteines 881 and 892 form a disulfide. A cross-link (2'-(S-cysteinyl)-histidine (Cys-His)) is located at residues 893–895; that stretch reads CHH. Residues H895, H904, H1013, H1017, H1044, and H1292 each coordinate Cu cation. The cysteines at positions 1003 and 1070 are disulfide-linked. Positions 1255–1667 are functional unit Odd; it reads NRIRKNLNAL…ADIKSEEGNE (413 aa). The cysteines at positions 1298 and 1309 are disulfide-linked. Residues 1310 to 1312 constitute a cross-link (2'-(S-cysteinyl)-histidine (Cys-His)); sequence CIH. H1312, H1321, H1425, H1429, and H1456 together coordinate Cu cation. A disulfide bond links C1415 and C1482. A glycan (N-linked (GlcNAc...) asparagine) is linked at N1496. A disulfide bridge links C1571 with C1581. N1634 carries N-linked (GlcNAc...) asparagine glycosylation. The segment at 1668-2085 is functional unit Ode; the sequence is YLVRKNVERL…NEDADIDTPL (418 aa). H1708 provides a ligand contact to Cu cation. A disulfide bond links C1714 and C1725. Residues 1726–1728 constitute a cross-link (2'-(S-cysteinyl)-histidine (Cys-His)); the sequence is CLH. H1728, H1737, H1849, H1853, and H1880 together coordinate Cu cation. 2 disulfide bridges follow: C1839-C1906 and C1997-C2003. N2055 carries an N-linked (GlcNAc...) asparagine glycan. Residues 2086 to 2502 are functional unit Odf; it reads NHIRRNVESL…REVHKKTVGD (417 aa). A Cu cation-binding site is contributed by H2126. A disulfide bond links C2131 and C2141. Residues 2142-2144 constitute a cross-link (2'-(S-cysteinyl)-histidine (Cys-His)); sequence CLH. H2144 and H2153 together coordinate Cu cation. Residue N2201 is glycosylated (N-linked (GlcNAc...) asparagine). 2 disulfide bridges follow: C2252–C2319 and C2406–C2411. Cu cation is bound by residues H2262, H2266, and H2293. Residues 2503–2896 form a functional unit Odg region; that stretch reads AIIRKNVNSL…VFLAPAKTTH (394 aa). Cu cation is bound at residue H2543. C2549 and C2559 are joined by a disulfide. N2553 is a glycosylation site (N-linked (GlcNAc...) asparagine). The 2'-(S-cysteinyl)-histidine (Cys-His) cross-link spans 2560–2562; it reads CQH. Positions 2562, 2571, 2671, 2675, and 2702 each coordinate Cu cation. Disulfide bonds link C2661–C2728 and C2815–C2821.

Belongs to the tyrosinase family. Hemocyanin subfamily. As to quaternary structure, decamers of large identical subunits (350 kDa), each containing 7 globular oxygen-binding functional units: ODA, ODB, ODC, ODD, ODE, ODF, and ODG. Decamer formation requires the presence of magnesium ions. It depends on Cu(2+) as a cofactor.

Its function is as follows. Hemocyanins are copper-containing oxygen carriers occurring freely dissolved in the hemolymph of many mollusks and arthropods. This Enteroctopus dofleini (North Pacific giant octopus) protein is Hemocyanin G-type, units Oda to Odg (ODHCY).